A 428-amino-acid polypeptide reads, in one-letter code: Proline--tRNA ligase (428 aa).

It belongs to the class-II aminoacyl-tRNA synthetase family. ProS type 2 subfamily. Homodimer.

It localises to the cytoplasm. The catalysed reaction is tRNA(Pro) + L-proline + ATP = L-prolyl-tRNA(Pro) + AMP + diphosphate. Catalyzes the attachment of proline to tRNA(Pro) in a two-step reaction: proline is first activated by ATP to form Pro-AMP and then transferred to the acceptor end of tRNA(Pro). This Rickettsia typhi (strain ATCC VR-144 / Wilmington) protein is Proline--tRNA ligase.